The primary structure comprises 334 residues: Leucine carboxyl methyltransferase 1 (334 aa).

S-adenosyl-L-methionine is bound by residues K37, R73, G98, D122, 171 to 172, and E198; that span reads DL.

The protein belongs to the methyltransferase superfamily. LCMT family.

The enzyme catalyses [phosphatase 2A protein]-C-terminal L-leucine + S-adenosyl-L-methionine = [phosphatase 2A protein]-C-terminal L-leucine methyl ester + S-adenosyl-L-homocysteine. Functionally, methylates the carboxyl group of the C-terminal leucine residue of protein phosphatase 2A catalytic subunits to form alpha-leucine ester residues. The protein is Leucine carboxyl methyltransferase 1 (LCMT1) of Homo sapiens (Human).